Here is a 345-residue protein sequence, read N- to C-terminus: NADH-ubiquinone oxidoreductase chain 2 (345 aa).

Transmembrane regions (helical) follow at residues 1 to 21 (MNPI…VITM), 25 to 45 (NLML…PMLI), 56 to 76 (ATKY…AIVL), 92 to 114 (GLIL…FHFW), 149 to 171 (LNST…GGLN), 178 to 198 (IMAY…PYNP), 200 to 220 (LTLL…MALM), 241 to 261 (LTMI…TGFL), 274 to 294 (NCLI…FFYT), and 324 to 344 (LMFS…PQLI).

This sequence belongs to the complex I subunit 2 family. In terms of assembly, core subunit of respiratory chain NADH dehydrogenase (Complex I) which is composed of 45 different subunits. Interacts with TMEM242.

It is found in the mitochondrion inner membrane. The catalysed reaction is a ubiquinone + NADH + 5 H(+)(in) = a ubiquinol + NAD(+) + 4 H(+)(out). In terms of biological role, core subunit of the mitochondrial membrane respiratory chain NADH dehydrogenase (Complex I) which catalyzes electron transfer from NADH through the respiratory chain, using ubiquinone as an electron acceptor. Essential for the catalytic activity and assembly of complex I. The polypeptide is NADH-ubiquinone oxidoreductase chain 2 (Mus musculus (Mouse)).